The primary structure comprises 350 residues: Chorismate synthase (350 aa).

Residues arginine 39 and arginine 45 each coordinate NADP(+). FMN contacts are provided by residues 119–121 (RSS), 213–214 (QA), glycine 258, 273–277 (KPIPT), and arginine 299.

It belongs to the chorismate synthase family. As to quaternary structure, homotetramer. It depends on FMNH2 as a cofactor.

It carries out the reaction 5-O-(1-carboxyvinyl)-3-phosphoshikimate = chorismate + phosphate. Its pathway is metabolic intermediate biosynthesis; chorismate biosynthesis; chorismate from D-erythrose 4-phosphate and phosphoenolpyruvate: step 7/7. Its function is as follows. Catalyzes the anti-1,4-elimination of the C-3 phosphate and the C-6 proR hydrogen from 5-enolpyruvylshikimate-3-phosphate (EPSP) to yield chorismate, which is the branch point compound that serves as the starting substrate for the three terminal pathways of aromatic amino acid biosynthesis. This reaction introduces a second double bond into the aromatic ring system. The polypeptide is Chorismate synthase (Thermoanaerobacter pseudethanolicus (strain ATCC 33223 / 39E) (Clostridium thermohydrosulfuricum)).